We begin with the raw amino-acid sequence, 315 residues long: Glutathione synthetase (315 aa).

Residues 125-310 (KLFTAWFSEF…ITGMLFDAIE (186 aa)) form the ATP-grasp domain. 151–207 (HQAKGDIILKPLDGMGGTSIFRVKQDDPNLGVIIETLTQYGNQYAMAQAFIPEITKG) serves as a coordination point for ATP. Mg(2+)-binding residues include Glu-281 and Asn-283.

The protein belongs to the prokaryotic GSH synthase family. The cofactor is Mg(2+). Mn(2+) is required as a cofactor.

The catalysed reaction is gamma-L-glutamyl-L-cysteine + glycine + ATP = glutathione + ADP + phosphate + H(+). It participates in sulfur metabolism; glutathione biosynthesis; glutathione from L-cysteine and L-glutamate: step 2/2. This Shewanella oneidensis (strain ATCC 700550 / JCM 31522 / CIP 106686 / LMG 19005 / NCIMB 14063 / MR-1) protein is Glutathione synthetase.